Reading from the N-terminus, the 161-residue chain is Large ribosomal subunit protein uL15 (161 aa).

A disordered region spans residues 1-42 (MKLSDIADNAGSRKKRMRVGRGIGSGKGKQSGRGGKGQTARS). The segment covering 21-37 (RGIGSGKGKQSGRGGKG) has biased composition (gly residues).

It belongs to the universal ribosomal protein uL15 family. Part of the 50S ribosomal subunit.

Binds to the 23S rRNA. The polypeptide is Large ribosomal subunit protein uL15 (Bradyrhizobium diazoefficiens (strain JCM 10833 / BCRC 13528 / IAM 13628 / NBRC 14792 / USDA 110)).